The sequence spans 390 residues: MSVYNPNDADFAFTLGIEEEYQIVDPETRELRSYITQILEPGRTILREQIKPEMHQSIVEVGTRPCRTISEARAEIVRLRSAIAGLAARHNLRIVAAGTHPFSSWMQQEITPDERYHMVVGEMQDAALQLLIFGMHCHIGMPNNEVAIELMNVARYICPHLLALSTSSPFWMGRNTGFKSYRSVIFSTFPRTGIPPTFHSASEFERYVQLLVNTGCIDNGKKIWWDLRPHPFFGTLEFRVCDIATKVEECLALAATMQALIVKFYTMFEENTTFRVYRRALINENKWRAQRWGLDGKLIDFGKRKEVEAKALVHEIVELVDDVVDMLGSRREVEYLLKIVENGTSADRQLRVFAETNDLKAVVDNLMVETMEGVPAMAFEADVQSQAAHS.

This sequence belongs to the glutamate--cysteine ligase type 2 family. YbdK subfamily.

It catalyses the reaction L-cysteine + L-glutamate + ATP = gamma-L-glutamyl-L-cysteine + ADP + phosphate + H(+). Its function is as follows. ATP-dependent carboxylate-amine ligase which exhibits weak glutamate--cysteine ligase activity. This is Putative glutamate--cysteine ligase 2 from Chloroflexus aurantiacus (strain ATCC 29366 / DSM 635 / J-10-fl).